A 677-amino-acid chain; its full sequence is DNA ligase (677 aa).

Residues 36 to 40 (DAEYD), 85 to 86 (SI), and E122 contribute to the NAD(+) site. K124 serves as the catalytic N6-AMP-lysine intermediate. NAD(+) is bound by residues R145, E181, K298, and K322. Positions 416, 419, 434, and 440 each coordinate Zn(2+). The 78-residue stretch at 600–677 (LTPRPLAGKT…DEAALRALLD (78 aa)) folds into the BRCT domain.

This sequence belongs to the NAD-dependent DNA ligase family. LigA subfamily. Requires Mg(2+) as cofactor. It depends on Mn(2+) as a cofactor.

The catalysed reaction is NAD(+) + (deoxyribonucleotide)n-3'-hydroxyl + 5'-phospho-(deoxyribonucleotide)m = (deoxyribonucleotide)n+m + AMP + beta-nicotinamide D-nucleotide.. DNA ligase that catalyzes the formation of phosphodiester linkages between 5'-phosphoryl and 3'-hydroxyl groups in double-stranded DNA using NAD as a coenzyme and as the energy source for the reaction. It is essential for DNA replication and repair of damaged DNA. The protein is DNA ligase of Methylibium petroleiphilum (strain ATCC BAA-1232 / LMG 22953 / PM1).